Reading from the N-terminus, the 21-residue chain is Agglutinin beta-1 chain (21 aa).

The segment covering Asn1–Ile10 has biased composition (polar residues). Residues Asn1–Asn21 form a disordered region.

Belongs to the jacalin lectin family. In terms of assembly, formed of four alpha chains and four beta chains.

In terms of biological role, D-galactose-specific lectin, binds the T-antigen structure Gal-beta1,3-GalNAc. The protein is Agglutinin beta-1 chain of Maclura pomifera (Osage orange).